We begin with the raw amino-acid sequence, 971 residues long: MELSDANLQTLTEYLKKTLDPDPAIRRPAEKFLESVEGNQNYPLLLLTLLEKSQDNVIKVCASVTFKNYIKRNWRIVEDEPNKICEADRVAIKANIVHLMLSSPEQIQKQLSDAISIIGREDFPQKWPDLLTEMVNRFQSGDFHVINGVLRTAHSLFKRYRHEFKSNELWTEIKLVLDAFALPLTNLFKATIELCSTHANDASALRILFSSLILISKLFYSLNFQDLPEFFEDNMETWMNNFHTLLTLDNKLLQTDDEEEAGLLELLKSQICDNAALYAQKYDEEFQRYLPRFVTAIWNLLVTTGREVKYDLLVSNAIQFLASVCERPHYKNLFEDQNTLTSICEKVIVPNMEFRAADEEAFEDNSEEYIRRDLEGSDIDTRRRAACDLVRGLCKFFEGPVTGIFSGYVNSMLQEYAKNPSVNWKHKDAAIYLVTSLASKAQTQKHGITQANELVNLTEFFVNHILPDLKSNNVNEFPVLKADGIKYIMIFRNQVPKEHLLVSIPLLISHLEAESIVVHTYAAHALERLFTMRGSNNTTLFTAAEIAPFVEILLTNLFKALTLPGSSENEYIMKAIMRSFSLLQEAIIPYIPTLITQLTQKLLAVSKNPSKPHFNHYMFEAICLSIRITCKANPAAVVNFEEALFLVFTEILQNDVQEFIPYVFQVMSLLLETHKNDIPSSYMALFPHLLQPVLWERTGNIPALVRLLQAFLERGSSTIATAAADKIPGLLGVFQKLIASKANDHQGFYLLNSIIEHMPPESVDQYRKQIFILLFQRLQNSKTTKFIKSFLVFINLYCIKYGALALQEIFDGIQPKMFGMVLEKIIIPEIQKVSGNVEKKICAVGITKLLTECPPMMDTEYTKLWTPLLQSLIGLFELPEDDSIPDEEHFIDIEDTPGYQTAFSQLAFAGKKEHDPVGQMVNNPKIHLAQSLHKLSTACPGRVPSMVSTSLNAEALQYLQGYLQAASVTLL.

Met1 is subject to N-acetylmethionine. One can recognise an Importin N-terminal domain in the interval 29 to 102; sequence AEKFLESVEG…KANIVHLMLS (74 aa). Ser112 carries the phosphoserine modification. 2 positions are modified to N6-acetyllysine: Lys574 and Lys824. Ser931 bears the Phosphoserine mark.

Belongs to the XPO2/CSE1 family. Found in a complex with CSE1L/XPO2, Ran and KPNA2. Binds with high affinity to importin-alpha only in the presence of RanGTP. The complex is dissociated by the combined action of RanBP1 and RanGAP1. Interacts with CFTR. Ubiquitous. Detected in embryos from 5 to 17 dpc. Highly expressed in adult testis, heart, brain, lung, liver, skeletal muscle, spleen and kidney.

It is found in the cytoplasm. The protein localises to the nucleus. Export receptor for importin-alpha. Mediates importin-alpha re-export from the nucleus to the cytoplasm after import substrates (cargos) have been released into the nucleoplasm. In the nucleus binds cooperatively to importin-alpha and to the GTPase Ran in its active GTP-bound form. Docking of this trimeric complex to the nuclear pore complex (NPC) is mediated through binding to nucleoporins. Upon transit of a nuclear export complex into the cytoplasm, disassembling of the complex and hydrolysis of Ran-GTP to Ran-GDP (induced by RANBP1 and RANGAP1, respectively) cause release of the importin-alpha from the export receptor. CSE1L/XPO2 then return to the nuclear compartment and mediate another round of transport. The directionality of nuclear export is thought to be conferred by an asymmetric distribution of the GTP- and GDP-bound forms of Ran between the cytoplasm and nucleus. The chain is Exportin-2 (Cse1l) from Mus musculus (Mouse).